The primary structure comprises 519 residues: Cytochrome P450 88A1 (519 aa).

The helical transmembrane segment at 1–21 (MLGVGMAAAVLLGAVALLLAD) threads the bilayer. Cysteine 466 lines the heme pocket.

It belongs to the cytochrome P450 family. Requires heme as cofactor. As to expression, expressed in roots, developing leaves, the vegetative meristem, and suspension culture cells.

It localises to the membrane. It functions in the pathway plant hormone biosynthesis; gibberellin biosynthesis. This chain is Cytochrome P450 88A1 (CYP88A1), found in Zea mays (Maize).